Reading from the N-terminus, the 622-residue chain is 1-deoxy-D-xylulose-5-phosphate synthase (622 aa).

Thiamine diphosphate contacts are provided by residues His80 and 121–123 (GHS). Position 152 (Asp152) interacts with Mg(2+). Thiamine diphosphate-binding positions include 153–154 (GA), Asn181, Tyr288, and Glu370. Asn181 contacts Mg(2+).

This sequence belongs to the transketolase family. DXPS subfamily. Homodimer. Mg(2+) is required as a cofactor. Requires thiamine diphosphate as cofactor.

It catalyses the reaction D-glyceraldehyde 3-phosphate + pyruvate + H(+) = 1-deoxy-D-xylulose 5-phosphate + CO2. It participates in metabolic intermediate biosynthesis; 1-deoxy-D-xylulose 5-phosphate biosynthesis; 1-deoxy-D-xylulose 5-phosphate from D-glyceraldehyde 3-phosphate and pyruvate: step 1/1. Catalyzes the acyloin condensation reaction between C atoms 2 and 3 of pyruvate and glyceraldehyde 3-phosphate to yield 1-deoxy-D-xylulose-5-phosphate (DXP). This chain is 1-deoxy-D-xylulose-5-phosphate synthase, found in Hamiltonella defensa subsp. Acyrthosiphon pisum (strain 5AT).